Here is a 90-residue protein sequence, read N- to C-terminus: Accessory gland-specific peptide 26Ab (90 aa).

An N-terminal signal peptide occupies residues 1 to 21 (MNYFAVLCIFSCICLWQFSDA).

As to expression, main cells of the accessory glands of males.

It is found in the secreted. The protein resides in the extracellular space. In terms of biological role, this protein is transferred from male to female during mating and may affect egglaying and behavior after mating. This is Accessory gland-specific peptide 26Ab (Acp26Ab) from Drosophila sechellia (Fruit fly).